Reading from the N-terminus, the 441-residue chain is Xylose isomerase (441 aa).

Catalysis depends on residues His99 and Asp102. Mn(2+) contacts are provided by Glu230, Glu266, Asp294, Asp305, Asp307, and Asp337.

Belongs to the xylose isomerase family. Homotetramer. It depends on Mn(2+) as a cofactor.

It is found in the cytoplasm. It catalyses the reaction alpha-D-xylose = alpha-D-xylulofuranose. The sequence is that of Xylose isomerase (xylA) from Geobacillus stearothermophilus (Bacillus stearothermophilus).